A 117-amino-acid polypeptide reads, in one-letter code: Snaclec CHH-B subunit beta (117 aa).

3 disulfides stabilise this stretch: cysteine 2–cysteine 13, cysteine 30–cysteine 115, and cysteine 92–cysteine 107. The C-type lectin domain maps to 9–116 (YEGHCYRVFQ…CSKTHNVVCK (108 aa)).

Belongs to the snaclec family. As to quaternary structure, heterodimer of subunits alpha and beta; disulfide-linked. In terms of tissue distribution, expressed by the venom gland.

It is found in the secreted. In terms of biological role, binds to the subunit GPIbalpha (GP1BA) of the platelet GPIb/V/IX receptor system. It inhibits ristocetin- and vWF-induced platelet aggregation in platelet-rich plasma by inhibiting the binding of vWF to GPIbalpha. This is Snaclec CHH-B subunit beta from Crotalus horridus (Timber rattlesnake).